The chain runs to 318 residues: Ribose-phosphate pyrophosphokinase 2 (318 aa).

96–101 (RQDKKD) serves as a coordination point for ATP. Mg(2+) contacts are provided by aspartate 128, histidine 130, aspartate 139, and aspartate 143. Histidine 130 contributes to the ATP binding site. Residues 212-227 (KDRVAILVDDMADTCG) form a binding of phosphoribosylpyrophosphate region.

Belongs to the ribose-phosphate pyrophosphokinase family. As to quaternary structure, homodimer. The active form is probably a hexamer composed of 3 homodimers. Requires Mg(2+) as cofactor.

It carries out the reaction D-ribose 5-phosphate + ATP = 5-phospho-alpha-D-ribose 1-diphosphate + AMP + H(+). Its pathway is metabolic intermediate biosynthesis; 5-phospho-alpha-D-ribose 1-diphosphate biosynthesis; 5-phospho-alpha-D-ribose 1-diphosphate from D-ribose 5-phosphate (route I): step 1/1. Activated by magnesium and inorganic phosphate. Competitively or non-competitively inhibited by ADP, 2,3-bisphosphoglyceride or GDP. Its function is as follows. Catalyzes the synthesis of phosphoribosylpyrophosphate (PRPP) that is essential for nucleotide synthesis. This is Ribose-phosphate pyrophosphokinase 2 (prps2) from Xenopus laevis (African clawed frog).